The primary structure comprises 132 residues: Sec-independent protein translocase protein TatB (132 aa).

A helical transmembrane segment spans residues 2–22 (FDGIGFMELLLIGILGLVVLG). 2 stretches are compositionally biased toward polar residues: residues 86–95 (LKQAAQSVNR) and 116–132 (IAET…KNNG). Residues 86 to 132 (LKQAAQSVNRPYQLDESNEQEPKIAPPQANIAETPTQSGDTHSKNNG) form a disordered region.

It belongs to the TatB family. In terms of assembly, the Tat system comprises two distinct complexes: a TatABC complex, containing multiple copies of TatA, TatB and TatC subunits, and a separate TatA complex, containing only TatA subunits. Substrates initially bind to the TatABC complex, which probably triggers association of the separate TatA complex to form the active translocon.

It is found in the cell inner membrane. In terms of biological role, part of the twin-arginine translocation (Tat) system that transports large folded proteins containing a characteristic twin-arginine motif in their signal peptide across membranes. Together with TatC, TatB is part of a receptor directly interacting with Tat signal peptides. TatB may form an oligomeric binding site that transiently accommodates folded Tat precursor proteins before their translocation. This chain is Sec-independent protein translocase protein TatB, found in Shewanella denitrificans (strain OS217 / ATCC BAA-1090 / DSM 15013).